Consider the following 82-residue polypeptide: MVVIRLARGGSKKRPFYSIVVADSRYARDGRFIEQLGFYNPIARGGEIPLKLNLESLDAWVAKGAQLSDRVKTLAKQARKAA.

Belongs to the bacterial ribosomal protein bS16 family.

In Alcanivorax borkumensis (strain ATCC 700651 / DSM 11573 / NCIMB 13689 / SK2), this protein is Small ribosomal subunit protein bS16.